A 651-amino-acid chain; its full sequence is MAPSSLFLSVGSLIASSLVSATALEARQSQTYQLAESWQGESFINDWNFFDRADPTNGYVTYVNQSFAEQSGLVKVTQSGSFYMGVDYESTLNPNGPGRESVRIETKNYYTEGLYVIDIEHMPGSICGTWPAFWSVGKDWPNDGEIDIIEGVNLQKANKIVLHTSGSCDVSGSNDMTGTLSSSECGEASGTVGCVVKGTNGSSGDPFNEAGGGVYAMEWTDTFIKIWFFPRSQIPASLSSGNPDTSSFGTPMAHLQGSCDFAERFKAQKFIIDTTFCGDWAGNVFAESTCPMSDPSSPMQSCVNYVAQNPAAFKEAYWEINSIKVYQYGVSAASSAAVSQATASKVEGTLVSVQAANTATPTVPVPAETTAVPQPAQTNTVATSAADYATQSSAETTTVPAATGAPSVSAAEGGDSELESTSTVYVTSTTTICPVAESSSAAAAGGKKDAPFNGVSGAEVAATSVAAAPAAATSEHPGADAIANSAAATSTVAKSEGVASQLTAGALSEIPTAPPEPVSQAVSTGSFDDSDTAQGDSEEHGSIASASAAPSTIPVPASSSAAALGGSSIASSFASSRLVPRPTGSSTAASVTAIATWSPTAGERASGTAKGSATLTAPSEVVFTPGLSNGANRMSVGLSGLIGVMFIAALA.

An N-terminal signal peptide occupies residues 1-21; it reads MAPSSLFLSVGSLIASSLVSA. One can recognise a GH16 domain in the interval 36–289; that stretch reads ESWQGESFIN…WAGNVFAEST (254 aa). The N-linked (GlcNAc...) asparagine glycan is linked to Asn64. The active-site Nucleophile is the Glu145. The Proton donor role is filled by Glu150. A glycan (N-linked (GlcNAc...) asparagine) is linked at Asn200. The span at 364 to 378 shows a compositional bias: low complexity; that stretch reads PVPAETTAVPQPAQT. Disordered regions lie at residues 364–422 and 508–557; these read PVPA…ESTS and SEIP…PVPA. 2 stretches are compositionally biased toward polar residues: residues 379-400 and 520-535; these read NTVA…TTVP and QAVS…TAQG. A compositionally biased stretch (low complexity) spans 542–557; that stretch reads SIASASAAPSTIPVPA. Asn629 carries the GPI-anchor amidated asparagine lipid modification. The propeptide at 630–651 is removed in mature form; sequence GANRMSVGLSGLIGVMFIAALA.

The protein belongs to the glycosyl hydrolase 16 family.

Its subcellular location is the cell membrane. The enzyme catalyses Endohydrolysis of (1-&gt;3)- or (1-&gt;4)-linkages in beta-D-glucans when the glucose residue whose reducing group is involved in the linkage to be hydrolyzed is itself substituted at C-3.. Functionally, mixed-linked glucanase involved in the degradation of complex natural cellulosic substrates. This chain is Probable endo-1,3(4)-beta-glucanase NFIA_089530, found in Neosartorya fischeri (strain ATCC 1020 / DSM 3700 / CBS 544.65 / FGSC A1164 / JCM 1740 / NRRL 181 / WB 181) (Aspergillus fischerianus).